We begin with the raw amino-acid sequence, 245 residues long: E3 ubiquitin-protein ligase RNF138 (245 aa).

The RING-type zinc-finger motif lies at 18 to 58 (CPVCQEVLKTPVRTAACQHVFCRKCFLTAMRESGIHCPLCR). The Zn(2+) site is built by Cys86, Cys89, His101, and Cys105. A C2HC RNF-type zinc finger spans residues 86-105 (CRCCSKKIKFYRMRHHYKSC). The disordered stretch occupies residues 128 to 154 (VRSSNRSETSASDNTETYQEDTSSSGH). Thr142 is subject to Phosphothreonine. 2 C2H2-type zinc fingers span residues 157–180 (FKCP…NSNH) and 187–215 (VTCP…NQRH). In terms of domain architecture, UIM spans 225 to 243 (LQLDEETQYQTAVEESFQV).

As to quaternary structure, interacts with NLK. Interacts with XRCC5/Ku80. Interacts with RBBP8/CtIP. In terms of processing, auto-ubiquitinated.

Its subcellular location is the chromosome. It catalyses the reaction S-ubiquitinyl-[E2 ubiquitin-conjugating enzyme]-L-cysteine + [acceptor protein]-L-lysine = [E2 ubiquitin-conjugating enzyme]-L-cysteine + N(6)-ubiquitinyl-[acceptor protein]-L-lysine.. The protein operates within protein modification; protein ubiquitination. E3 ubiquitin-protein ligase involved in DNA damage response by promoting DNA resection and homologous recombination. Recruited to sites of double-strand breaks following DNA damage and specifically promotes double-strand break repair via homologous recombination. Two different, non-exclusive, mechanisms have been proposed. According to a report, regulates the choice of double-strand break repair by favoring homologous recombination over non-homologous end joining (NHEJ): acts by mediating ubiquitination of XRCC5/Ku80, leading to remove the Ku complex from DNA breaks, thereby promoting homologous recombination. According to another report, cooperates with UBE2Ds E2 ubiquitin ligases (UBE2D1, UBE2D2, UBE2D3 or UBE2D4) to promote homologous recombination by mediating ubiquitination of RBBP8/CtIP. Together with NLK, involved in the ubiquitination and degradation of TCF/LEF. Also exhibits auto-ubiquitination activity in combination with UBE2K. May act as a negative regulator in the Wnt/beta-catenin-mediated signaling pathway. The chain is E3 ubiquitin-protein ligase RNF138 from Mus musculus (Mouse).